We begin with the raw amino-acid sequence, 448 residues long: Cyclic dof factor 3 (448 aa).

The interval 26 to 108 (AVTVEDDEED…DGKTLKKPTK (83 aa)) is disordered. Acidic residues predominate over residues 29–39 (VEDDEEDDWSG). Positions 40-54 (GDDKSPEKVTPELSD) are enriched in basic and acidic residues. The span at 55-69 (KNNNNCNDNSFNNSK) shows a compositional bias: low complexity. A compositionally biased stretch (polar residues) spans 80–99 (STDQIESSDTPEDNQQTTPD). The Dof-type zinc-finger motif lies at 110–164 (LPCPRCKSMETKFCYYNNYNINQPRHFCKACQRYWTAGGTMRNVPVGAGRRKNKS). Zn(2+) is bound by residues cysteine 112, cysteine 115, cysteine 137, and cysteine 140. Disordered stretches follow at residues 243-269 (NGDDCSSGSSVTTSNNHSVDESRAQSG) and 332-370 (SSSPISQKCSNTNSPTLGKHPRDEGSSKKDNETERKQKA). Polar residues-rich tracts occupy residues 246-259 (DCSSGSSVTTSNNH) and 332-347 (SSSPISQKCSNTNSPT). The segment covering 351-368 (HPRDEGSSKKDNETERKQ) has biased composition (basic and acidic residues).

In terms of assembly, interacts with ADO2 (via kelch repeats) and ADO3 (via kelch repeats). Expressed in the vasculature of cotyledons and hypocotyls, leaves and roots.

It localises to the nucleus. In terms of biological role, transcription factor that binds specifically to a 5'-AA[AG]G-3' consensus core sequence. Regulates a photoperiodic flowering response. Transcriptional repressor of 'CONSTANS' expression. In Arabidopsis thaliana (Mouse-ear cress), this protein is Cyclic dof factor 3 (CDF3).